A 391-amino-acid polypeptide reads, in one-letter code: DNA repair protein NreA (391 aa).

The C4-type zinc finger occupies 6–20; it reads CAECKGKLLCGRSKC. A PIP motif motif is present at residues 382-389; the sequence is QTSLASFF.

It belongs to the Nre family. As to quaternary structure, interacts with the DNA polymerase sliding clamp (PCNA) via the PIP (PCNA-interacting peptide) motif.

In terms of biological role, involved in DNA damage repair. This is DNA repair protein NreA from Archaeoglobus fulgidus (strain ATCC 49558 / DSM 4304 / JCM 9628 / NBRC 100126 / VC-16).